Here is a 291-residue protein sequence, read N- to C-terminus: Ribosomal RNA small subunit methyltransferase H (291 aa).

S-adenosyl-L-methionine is bound by residues 31–33, Asp49, Phe76, Asp97, and Gln104; that span reads GGY.

Belongs to the methyltransferase superfamily. RsmH family.

It localises to the cytoplasm. It catalyses the reaction cytidine(1402) in 16S rRNA + S-adenosyl-L-methionine = N(4)-methylcytidine(1402) in 16S rRNA + S-adenosyl-L-homocysteine + H(+). Functionally, specifically methylates the N4 position of cytidine in position 1402 (C1402) of 16S rRNA. This is Ribosomal RNA small subunit methyltransferase H from Anaplasma marginale (strain St. Maries).